The chain runs to 845 residues: DNA replication licensing factor MCM7 (845 aa).

In terms of domain architecture, MCM spans 410–617; that stretch reads VYNRLAKSIA…DDEKLAEHVT (208 aa). Residues tyrosine 423, glycine 463, alanine 465, lysine 466, serine 467, asparagine 568, arginine 593, and arginine 687 each coordinate ATP. Positions 592-595 match the Arginine finger motif; it reads SRFD. Position 811 is a phosphothreonine (threonine 811). The interval 812-845 is disordered; sequence DQEDSLVSTPKLAPQTTASANVSAQDSDIDLQDA. Serine 819 is modified (phosphoserine). Polar residues predominate over residues 825 to 837; sequence PQTTASANVSAQD. Serine 838 is subject to Phosphoserine.

It belongs to the MCM family. In terms of assembly, component of the MCM2-7 complex. The complex forms a toroidal hexameric ring with the proposed subunit order MCM2-MCM6-MCM4-MCM7-MCM3-MCM5; loaded onto DNA, forms a head-head double hexamer. Interacts with CSM1 and MCM10.

Its subcellular location is the cytoplasm. It is found in the nucleus. The enzyme catalyses ATP + H2O = ADP + phosphate + H(+). Acts as a component of the MCM2-7 complex (MCM complex) which is the putative replicative helicase essential for 'once per cell cycle' DNA replication initiation and elongation in eukaryotic cells. Core component of CDC45-MCM-GINS (CMG) helicase, the molecular machine that unwinds template DNA during replication, and around which the replisome is built. The active ATPase sites in the MCM2-7 ring are formed through the interaction surfaces of two neighboring subunits such that a critical structure of a conserved arginine finger motif is provided in trans relative to the ATP-binding site of the Walker A box of the adjacent subunit. The six ATPase active sites, however, are likely to contribute differentially to the complex helicase activity. Once loaded onto DNA, double hexamers can slide on dsDNA in the absence of ATPase activity. This Saccharomyces cerevisiae (strain ATCC 204508 / S288c) (Baker's yeast) protein is DNA replication licensing factor MCM7 (MCM7).